The following is a 911-amino-acid chain: Protein translocase subunit SecA (911 aa).

ATP contacts are provided by residues glutamine 87, 105 to 109 (GEGKT), and aspartate 512. The tract at residues 865–892 (AAEQDGAEEGAVATATAPVRSENKVGRN) is disordered. A compositionally biased stretch (low complexity) spans 873 to 883 (EGAVATATAPV). Zn(2+) is bound by residues cysteine 895, cysteine 897, cysteine 906, and histidine 907.

The protein belongs to the SecA family. Monomer and homodimer. Part of the essential Sec protein translocation apparatus which comprises SecA, SecYEG and auxiliary proteins SecDF-YajC and YidC. Zn(2+) serves as cofactor.

It localises to the cell inner membrane. It is found in the cytoplasm. The catalysed reaction is ATP + H2O + cellular proteinSide 1 = ADP + phosphate + cellular proteinSide 2.. In terms of biological role, part of the Sec protein translocase complex. Interacts with the SecYEG preprotein conducting channel. Has a central role in coupling the hydrolysis of ATP to the transfer of proteins into and across the cell membrane, serving both as a receptor for the preprotein-SecB complex and as an ATP-driven molecular motor driving the stepwise translocation of polypeptide chains across the membrane. The chain is Protein translocase subunit SecA from Ectopseudomonas mendocina (strain ymp) (Pseudomonas mendocina).